Consider the following 590-residue polypeptide: Phosphatidylserine decarboxylase proenzyme 1, mitochondrial (590 aa).

The N-terminal 59 residues, 1–59 (MPLKPISFRWSKTSVRSVPNPFMYGPDNLNKPLSRASQMAERVHQQTPSSTNYQQRRYF), are a transit peptide targeting the mitochondrion. Topologically, residues 60–140 (SYYYYQFPKI…GKERRRFIRW (81 aa)) are mitochondrial matrix. The chain crosses the membrane as a helical span at residues 141–159 (WTVTSLTIVLGGVYAKIKY). Residues 160 to 590 (ERGDHEENPY…KVGQSLGGFV (431 aa)) lie on the Mitochondrial intermembrane side of the membrane. Catalysis depends on charge relay system; for autoendoproteolytic cleavage activity residues D260, H403, and S558. S558 acts as the Schiff-base intermediate with substrate; via pyruvic acid; for decarboxylase activity in catalysis. Pyruvic acid (Ser); by autocatalysis is present on S558.

This sequence belongs to the phosphatidylserine decarboxylase family. PSD-B subfamily. Eukaryotic type I sub-subfamily. In terms of assembly, heterodimer of a large membrane-associated beta subunit and a small pyruvoyl-containing alpha subunit. Pyruvate serves as cofactor. In terms of processing, is synthesized initially as an inactive proenzyme. Formation of the active enzyme involves a self-maturation process in which the active site pyruvoyl group is generated from an internal serine residue via an autocatalytic post-translational modification. Two non-identical subunits are generated from the proenzyme in this reaction, and the pyruvate is formed at the N-terminus of the alpha chain, which is derived from the carboxyl end of the proenzyme. The autoendoproteolytic cleavage occurs by a canonical serine protease mechanism, in which the side chain hydroxyl group of the serine supplies its oxygen atom to form the C-terminus of the beta chain, while the remainder of the serine residue undergoes an oxidative deamination to produce ammonia and the pyruvoyl prosthetic group on the alpha chain. During this reaction, the Ser that is part of the protease active site of the proenzyme becomes the pyruvoyl prosthetic group, which constitutes an essential element of the active site of the mature decarboxylase.

The protein resides in the mitochondrion inner membrane. The catalysed reaction is a 1,2-diacyl-sn-glycero-3-phospho-L-serine + H(+) = a 1,2-diacyl-sn-glycero-3-phosphoethanolamine + CO2. It participates in phospholipid metabolism; phosphatidylethanolamine biosynthesis; phosphatidylethanolamine from CDP-diacylglycerol: step 2/2. Functionally, catalyzes the formation of phosphatidylethanolamine (PtdEtn) from phosphatidylserine (PtdSer). Plays a central role in phospholipid metabolism and in the interorganelle trafficking of phosphatidylserine. Important for virulence. The chain is Phosphatidylserine decarboxylase proenzyme 1, mitochondrial from Candida albicans (strain SC5314 / ATCC MYA-2876) (Yeast).